A 121-amino-acid chain; its full sequence is Nitrogenase-stabilizing/protective protein NifW (121 aa).

This sequence belongs to the NifW family. As to quaternary structure, homotrimer; associates with NifD.

Functionally, may protect the nitrogenase Fe-Mo protein from oxidative damage. The polypeptide is Nitrogenase-stabilizing/protective protein NifW (Synechococcus sp. (strain JA-2-3B'a(2-13)) (Cyanobacteria bacterium Yellowstone B-Prime)).